A 447-amino-acid chain; its full sequence is Chromosomal replication initiator protein DnaA (447 aa).

Residues 1–70 (MQDFWSKAMD…EEILSEQLGE (70 aa)) form a domain I, interacts with DnaA modulators region. Residues 70 to 110 (EPVTLLFAADPALEKPVASKTQTVTPVQSGGETGDQENFHS) form a domain II region. The segment at 87–109 (ASKTQTVTPVQSGGETGDQENFH) is disordered. A compositionally biased stretch (polar residues) spans 88–99 (SKTQTVTPVQSG). Residues 111–327 (GLDPRYTFDS…GALIRVSAYA (217 aa)) form a domain III, AAA+ region region. Residues glycine 155, glycine 157, lysine 158, and threonine 159 each coordinate ATP. A domain IV, binds dsDNA region spans residues 328-447 (SLTGKPITMA…LASLKSMLQK (120 aa)).

Belongs to the DnaA family. In terms of assembly, oligomerizes as a right-handed, spiral filament on DNA at oriC.

Its subcellular location is the cytoplasm. In terms of biological role, plays an essential role in the initiation and regulation of chromosomal replication. ATP-DnaA binds to the origin of replication (oriC) to initiate formation of the DNA replication initiation complex once per cell cycle. Binds the DnaA box (a 9 base pair repeat at the origin) and separates the double-stranded (ds)DNA. Forms a right-handed helical filament on oriC DNA; dsDNA binds to the exterior of the filament while single-stranded (ss)DNA is stabiized in the filament's interior. The ATP-DnaA-oriC complex binds and stabilizes one strand of the AT-rich DNA unwinding element (DUE), permitting loading of DNA polymerase. After initiation quickly degrades to an ADP-DnaA complex that is not apt for DNA replication. Binds acidic phospholipids. The sequence is that of Chromosomal replication initiator protein DnaA from Magnetococcus marinus (strain ATCC BAA-1437 / JCM 17883 / MC-1).